A 126-amino-acid polypeptide reads, in one-letter code: Large ribosomal subunit protein bL12 (126 aa).

It belongs to the bacterial ribosomal protein bL12 family. Homodimer. Part of the ribosomal stalk of the 50S ribosomal subunit. Forms a multimeric L10(L12)X complex, where L10 forms an elongated spine to which 2 to 4 L12 dimers bind in a sequential fashion. Binds GTP-bound translation factors.

Functionally, forms part of the ribosomal stalk which helps the ribosome interact with GTP-bound translation factors. Is thus essential for accurate translation. The polypeptide is Large ribosomal subunit protein bL12 (Francisella tularensis subsp. mediasiatica (strain FSC147)).